The primary structure comprises 385 residues: uncharacterized protein (385 aa).

This sequence belongs to the mycobacterial PPE family.

This is an uncharacterized protein from Mycobacterium tuberculosis (strain CDC 1551 / Oshkosh).